A 336-amino-acid polypeptide reads, in one-letter code: Glyceraldehyde-3-phosphate dehydrogenase, chromosomal (336 aa).

NAD(+)-binding positions include 12–13, Asp37, Arg81, and Ser123; that span reads RI. Residues 154–156 and Thr185 each bind D-glyceraldehyde 3-phosphate; that span reads SCT. The Nucleophile role is filled by Cys155. Asn186 lines the NAD(+) pocket. D-glyceraldehyde 3-phosphate contacts are provided by residues Arg200, 213–214, and Arg236; that span reads TG. Asn317 is an NAD(+) binding site.

The protein belongs to the glyceraldehyde-3-phosphate dehydrogenase family. In terms of assembly, homotetramer.

It carries out the reaction D-glyceraldehyde 3-phosphate + phosphate + NAD(+) = (2R)-3-phospho-glyceroyl phosphate + NADH + H(+). The protein operates within carbohydrate biosynthesis; Calvin cycle. Functionally, could be involved in carbon fixation as a component of the Calvin cycle. Catalyzes the oxidative phosphorylation of glyceraldehyde 3-phosphate (G3P) to 1,3-bisphosphoglycerate (BPG) using the cofactor NAD. The first reaction step involves the formation of a hemiacetal intermediate between G3P and a cysteine residue, and this hemiacetal intermediate is then oxidized to a thioester, with concomitant reduction of NAD to NADH. The reduced NADH is then exchanged with the second NAD, and the thioester is attacked by a nucleophilic inorganic phosphate to produce BPG. The sequence is that of Glyceraldehyde-3-phosphate dehydrogenase, chromosomal (cbbGC) from Cupriavidus necator (strain ATCC 17699 / DSM 428 / KCTC 22496 / NCIMB 10442 / H16 / Stanier 337) (Ralstonia eutropha).